Reading from the N-terminus, the 172-residue chain is Dehydratase cfoI (172 aa).

Catalysis depends on residues His-86 and His-111.

It belongs to the scytalone dehydratase family. In terms of assembly, homotrimer. Each subunit contains an active site, located in the central part of the hydrophobic core of the monomer, which functions independently.

It functions in the pathway secondary metabolite biosynthesis; flavonoid biosynthesis. Functionally, cytochrome P450 monooxygenase; part of the gene cluster that mediates the biosynthesis of chlorflavonin, a fungal flavonoid with acetolactate synthase inhibitory activity. Within the pathway, cfoI is responsible for the hydroxylation of the flavonoid skeleton at position C3 with cfoF. The pathway begins with the PKS-NRPS hybrid synthetase cfoA that uses benzoic acid or p-hydroxybenzoic acid as a starter unit with four rounds of chain elongation using malonyl-CoA to form the chalcone skeleton. Then, a new type of chalcone isomerase, cfoK, catalyzes the conversion of the chalcone into a flavanone by a histidine-mediated oxa-Michael addition mechanism. The desaturation of flavanone to flavone is catalyzed by a new type of flavone synthase, the flavin mononucleotide (FMN)-dependent oxidoreductase cfoJ. Monooxygenases cfoF, cfoG, and P450 cfoH are responsible for the hydroxylation of the flavonoid skeleton at sites C3, C8, and C2', respectively. Like cfoF, the dehydratase cfoI plays also a role in the hydroxylation of position C3. Methyltransferases cfoB, cfoC, and cfoD then catalyze the methylation of C7-OH, C8-OH, and C3-OH, respectively. Finally, the monooxygenase cfoE is responsible for the chlorination of flavonoid at position C3'. The sequence is that of Dehydratase cfoI from Aspergillus candidus.